We begin with the raw amino-acid sequence, 207 residues long: Dephospho-CoA kinase (207 aa).

The DPCK domain occupies 10 to 207; sequence ILGLTGGIGS…FYLTLRGGQS (198 aa). Residue 18–23 participates in ATP binding; sequence GSGKSA.

The protein belongs to the CoaE family.

The protein resides in the cytoplasm. It carries out the reaction 3'-dephospho-CoA + ATP = ADP + CoA + H(+). The protein operates within cofactor biosynthesis; coenzyme A biosynthesis; CoA from (R)-pantothenate: step 5/5. In terms of biological role, catalyzes the phosphorylation of the 3'-hydroxyl group of dephosphocoenzyme A to form coenzyme A. This chain is Dephospho-CoA kinase, found in Pseudomonas syringae pv. tomato (strain ATCC BAA-871 / DC3000).